The following is a 109-amino-acid chain: Putative double-stranded DNA mimic protein YciU (109 aa).

It belongs to the putative dsDNA mimic protein family.

May act as a double-stranded DNA (dsDNA) mimic. Probably regulates the activity of a dsDNA-binding protein. The chain is Putative double-stranded DNA mimic protein YciU from Escherichia coli O45:K1 (strain S88 / ExPEC).